Reading from the N-terminus, the 336-residue chain is Tryptophan--tRNA ligase (336 aa).

ATP is bound by residues 15–17 (QPT) and 24–25 (GN). Positions 16 to 25 (PTSDSLHLGN) match the 'HIGH' region motif. Position 141 (D141) interacts with L-tryptophan. Residues 153–155 (GED), I192, and 201–205 (KMSKS) each bind ATP. A 'KMSKS' region motif is present at residues 201–205 (KMSKS).

This sequence belongs to the class-I aminoacyl-tRNA synthetase family. As to quaternary structure, homodimer.

Its subcellular location is the cytoplasm. It carries out the reaction tRNA(Trp) + L-tryptophan + ATP = L-tryptophyl-tRNA(Trp) + AMP + diphosphate + H(+). Functionally, catalyzes the attachment of tryptophan to tRNA(Trp). In Mycobacterium tuberculosis (strain CDC 1551 / Oshkosh), this protein is Tryptophan--tRNA ligase.